Here is a 120-residue protein sequence, read N- to C-terminus: Large ribosomal subunit protein bL17 (120 aa).

The protein belongs to the bacterial ribosomal protein bL17 family. Part of the 50S ribosomal subunit. Contacts protein L32.

This Geobacillus sp. (strain WCH70) protein is Large ribosomal subunit protein bL17.